Consider the following 732-residue polypeptide: uncharacterized protein (732 aa).

Belongs to the mimivirus L137 family.

This is an uncharacterized protein from Acanthamoeba polyphaga mimivirus (APMV).